Reading from the N-terminus, the 137-residue chain is Nucleoside diphosphate kinase (137 aa).

Positions 9, 57, 85, 91, 102, and 112 each coordinate ATP. Residue H115 is the Pros-phosphohistidine intermediate of the active site.

Belongs to the NDK family. As to quaternary structure, homotetramer. The cofactor is Mg(2+).

Its subcellular location is the cytoplasm. It carries out the reaction a 2'-deoxyribonucleoside 5'-diphosphate + ATP = a 2'-deoxyribonucleoside 5'-triphosphate + ADP. The catalysed reaction is a ribonucleoside 5'-diphosphate + ATP = a ribonucleoside 5'-triphosphate + ADP. Major role in the synthesis of nucleoside triphosphates other than ATP. The ATP gamma phosphate is transferred to the NDP beta phosphate via a ping-pong mechanism, using a phosphorylated active-site intermediate. The protein is Nucleoside diphosphate kinase of Thermus thermophilus (strain ATCC 27634 / DSM 579 / HB8).